Reading from the N-terminus, the 337-residue chain is MDLDVVNMFVIAGGTLAIPILAFVASFLLWPSALIRIYYWYWRRTLGMQVRYVHHEDYQFCYSFRGRPGHKPSVLMLHGFSAHKDMWLSVVKFLPKNLHLVCVDMPGHEGTTRSSLDDLSIVGQVKRIHQFVECLKLNKKPFHLIGTSMGGNVAGVYAAYYPSDVCSLSLVCPAGLQYSTDNRFVQRLKELEDSAATQKIPLIPSTPEEMSEMLQLCSYVRFKVPQQILQGLVDVRIPHNSFYRKLFLEIVSEKSRYSLHENMDKIKVPTQIIWGKQDQVLDVSGADILAKSITNSQVEVLENCGHSVVMERPRKTAKLVVDFLASVHNPDNNKKLN.

The Extracellular segment spans residues Met-1–Met-8. The helical; Signal-anchor for type II membrane protein transmembrane segment at Phe-9–Leu-29 threads the bilayer. Topologically, residues Trp-30–Asn-337 are cytoplasmic. Residue Ser-148 is the Nucleophile of the active site. Residues Asp-278 and His-306 each act as charge relay system in the active site.

It belongs to the AB hydrolase superfamily.

The protein resides in the late endosome membrane. The protein localises to the lysosome membrane. It localises to the mitochondrion membrane. It carries out the reaction Hydrolyzes glycerol monoesters of long-chain fatty acids.. The enzyme catalyses 1-octanoylglycerol + H2O = octanoate + glycerol + H(+). It catalyses the reaction 1-decanoylglycerol + H2O = decanoate + glycerol + H(+). The catalysed reaction is 1-dodecanoylglycerol + H2O = dodecanoate + glycerol + H(+). It carries out the reaction 1-tetradecanoylglycerol + H2O = tetradecanoate + glycerol + H(+). The enzyme catalyses 2-hexadecanoylglycerol + H2O = glycerol + hexadecanoate + H(+). It catalyses the reaction 2-(9Z-octadecenoyl)-glycerol + H2O = glycerol + (9Z)-octadecenoate + H(+). The catalysed reaction is 1-(9Z-octadecenoyl)-glycerol + H2O = glycerol + (9Z)-octadecenoate + H(+). It carries out the reaction 2-(9Z,12Z-octadecadienoyl)-glycerol + H2O = (9Z,12Z)-octadecadienoate + glycerol + H(+). The enzyme catalyses 2-(5Z,8Z,11Z,14Z-eicosatetraenoyl)-glycerol + H2O = glycerol + (5Z,8Z,11Z,14Z)-eicosatetraenoate + H(+). It catalyses the reaction 1-(5Z,8Z,11Z,14Z-eicosatetraenoyl)-glycerol + H2O = glycerol + (5Z,8Z,11Z,14Z)-eicosatetraenoate + H(+). The catalysed reaction is 1-(9Z,12Z-octadecadienoyl)-glycerol + H2O = (9Z,12Z)-octadecadienoate + glycerol + H(+). It carries out the reaction 3-(9Z-octadecenoyl)-sn-glycero-1-phospho-(3'-(9Z-octadecenoyl)-1'-sn-glycerol) + H2O = 3-(9Z-octadecenoyl)-sn-glycero-1-phospho-(1'-sn-glycerol) + (9Z)-octadecenoate + H(+). The enzyme catalyses (S,S)-2-(9Z-octadecenoyl)-sn-glycero-1-phospho-(2'-(9Z-octadecenoyl)-1'-sn-glycerol) + H2O = (S,S)-2-(9Z-octadecenoyl)-sn-glycero-1-phospho-(1'-sn-glycerol) + (9Z)-octadecenoate + H(+). It catalyses the reaction (R,R)-2-(9Z-octadecenoyl)-sn-glycero-3-phospho-(2'-(9Z-octadecenoyl)-3'-sn-glycerol) + H2O = (R,R)-2-(9Z-octadecenoyl)-sn-glycero-3-phospho-(3'-sn-glycerol) + (9Z)-octadecenoate + H(+). In terms of biological role, lipase that preferentially hydrolysis medium-chain saturated monoacylglycerols including 2-arachidonoylglycerol. Through 2-arachidonoylglycerol degradation may regulate endocannabinoid signaling pathways. Also has a lysophosphatidyl lipase activity with a preference for lysophosphatidylglycerol among other lysophospholipids. Also able to degrade bis(monoacylglycero)phosphate (BMP) and constitutes the major enzyme for BMP catabolism. BMP, also known as lysobisphosphatidic acid, is enriched in late endosomes and lysosomes and plays a key role in the formation of intraluminal vesicles and in lipid sorting. The polypeptide is Monoacylglycerol lipase ABHD6 (Rattus norvegicus (Rat)).